The following is a 95-amino-acid chain: uncharacterized protein (95 aa).

Residues 65–95 form a disordered region; that stretch reads DANDYDTTTTEEEDSSTTTTTDNETNSDDDI.

This is an uncharacterized protein from Lymantria dispar multicapsid nuclear polyhedrosis virus (LdMNPV).